A 188-amino-acid polypeptide reads, in one-letter code: Dual specificity protein phosphatase 18 (188 aa).

The Tyrosine-protein phosphatase domain maps to Gly19–Gly160. Positions Met95–Ile141 are sufficient for mitochondrial localization. The active-site Phosphocysteine intermediate is Cys104.

It belongs to the protein-tyrosine phosphatase family. Non-receptor class dual specificity subfamily.

The protein localises to the cytoplasm. It localises to the nucleus. It is found in the mitochondrion inner membrane. It carries out the reaction O-phospho-L-tyrosyl-[protein] + H2O = L-tyrosyl-[protein] + phosphate. The enzyme catalyses O-phospho-L-seryl-[protein] + H2O = L-seryl-[protein] + phosphate. The catalysed reaction is O-phospho-L-threonyl-[protein] + H2O = L-threonyl-[protein] + phosphate. Its function is as follows. Can dephosphorylate single and diphosphorylated synthetic MAPK peptides, with preference for the phosphotyrosine and diphosphorylated forms over phosphothreonine. In vitro, dephosphorylates p-nitrophenyl phosphate (pNPP). This is Dual specificity protein phosphatase 18 (Dusp18) from Mus musculus (Mouse).